Reading from the N-terminus, the 244-residue chain is tRNA (cytidine/uridine-2'-O-)-methyltransferase TrmJ (244 aa).

Residues 79 to 81, glycine 114, isoleucine 134, and 141 to 143 contribute to the S-adenosyl-L-methionine site; these read TSA and SSL.

The protein belongs to the class IV-like SAM-binding methyltransferase superfamily. RNA methyltransferase TrmH family. In terms of assembly, homodimer.

It localises to the cytoplasm. The enzyme catalyses cytidine(32) in tRNA + S-adenosyl-L-methionine = 2'-O-methylcytidine(32) in tRNA + S-adenosyl-L-homocysteine + H(+). It carries out the reaction uridine(32) in tRNA + S-adenosyl-L-methionine = 2'-O-methyluridine(32) in tRNA + S-adenosyl-L-homocysteine + H(+). Its function is as follows. Catalyzes the formation of 2'O-methylated cytidine (Cm32) or 2'O-methylated uridine (Um32) at position 32 in tRNA. The protein is tRNA (cytidine/uridine-2'-O-)-methyltransferase TrmJ (trmJ) of Klebsiella pneumoniae subsp. pneumoniae (strain ATCC 700721 / MGH 78578).